Here is a 283-residue protein sequence, read N- to C-terminus: 5'-nucleotidase SurE 2 (283 aa).

Residues aspartate 19, aspartate 20, serine 52, and asparagine 110 each contribute to the a divalent metal cation site.

Belongs to the SurE nucleotidase family. It depends on a divalent metal cation as a cofactor.

It is found in the cytoplasm. It catalyses the reaction a ribonucleoside 5'-phosphate + H2O = a ribonucleoside + phosphate. Its function is as follows. Nucleotidase that shows phosphatase activity on nucleoside 5'-monophosphates. This Chlamydia caviae (strain ATCC VR-813 / DSM 19441 / 03DC25 / GPIC) (Chlamydophila caviae) protein is 5'-nucleotidase SurE 2.